The primary structure comprises 222 residues: Vesicle transport v-SNARE 12 (222 aa).

An N-acetylserine modification is found at serine 2. Over 2-199 (SDVFEGYERQ…MSRRMTRNKW (198 aa)) the chain is Cytoplasmic. Residues 68–95 (KAVCLSKLREYKSDLNQLKKEFKRVSSA) are a coiled coil. Residues 200-220 (IITSVIVALVLAIILIISYKL) form a helical; Anchor for type IV membrane protein membrane-spanning segment. The Vesicular portion of the chain corresponds to 221–222 (SH).

It belongs to the VTI1 family. In terms of assembly, forms SNARE complexes with the t-SNAREs SYP61 and either SYP41 or SYP42, and with a much lower affinity with SYP51 in the TGN. Also interacts with VPS45, a Sec1 protein, but not with SYP21 or SYP22. Binds to EPSIN2. Core constituent of the SNARE complex required for membrane fusion at the trans-Golgi network. Interacts with SCYL2B. In terms of tissue distribution, expressed in roots, stems, flowers and leaves.

Its subcellular location is the golgi apparatus. The protein localises to the trans-Golgi network membrane. The protein resides in the prevacuolar compartment membrane. It is found in the cell membrane. In terms of biological role, together with either SYP41 or SYP61, required for membrane fusion; the fusion of phospholipid vesicles containing SYP41 or SYP61 and VTI12 is triggered by YKT61 and YKT62. Functions as a v-SNARE responsible for the docking or fusion of transport vesicles within the trans-Golgi network (TGN) and mediates liposome fusion. Necessary to deliver proteins to the protein storage vacuole (PSV). May be also involved in retrograde traffic to the cis-Golgi. This Arabidopsis thaliana (Mouse-ear cress) protein is Vesicle transport v-SNARE 12.